Reading from the N-terminus, the 125-residue chain is MLRTVLLGKIHRATVTGACLEYVGSISVDSRLLAAAGILPHEQVHVVNLNNGARLVTYAIEASEGSGAVVLNGAAARLAAAGDQVIVLAYGQGTAVELEHHQPQVVYVDAQNRIVSVHRSVEHAG.

The active-site Schiff-base intermediate with substrate; via pyruvic acid is serine 25. Residue serine 25 is modified to Pyruvic acid (Ser). Residue threonine 57 coordinates substrate. Tyrosine 58 serves as the catalytic Proton donor. 73 to 75 (GAA) serves as a coordination point for substrate.

Belongs to the PanD family. As to quaternary structure, heterooctamer of four alpha and four beta subunits. It depends on pyruvate as a cofactor. In terms of processing, is synthesized initially as an inactive proenzyme, which is activated by self-cleavage at a specific serine bond to produce a beta-subunit with a hydroxyl group at its C-terminus and an alpha-subunit with a pyruvoyl group at its N-terminus.

It localises to the cytoplasm. It catalyses the reaction L-aspartate + H(+) = beta-alanine + CO2. Its pathway is cofactor biosynthesis; (R)-pantothenate biosynthesis; beta-alanine from L-aspartate: step 1/1. In terms of biological role, catalyzes the pyruvoyl-dependent decarboxylation of aspartate to produce beta-alanine. In Gloeobacter violaceus (strain ATCC 29082 / PCC 7421), this protein is Aspartate 1-decarboxylase 2.